The chain runs to 122 residues: Photosystem II extrinsic protein U (122 aa).

Residues 1 to 26 (MKTIVRLFAILMVLISSVGFVGSAVA) form the signal peptide.

This sequence belongs to the PsbU family. As to quaternary structure, PSII is composed of 1 copy each of membrane proteins PsbA, PsbB, PsbC, PsbD, PsbE, PsbF, PsbH, PsbI, PsbJ, PsbK, PsbL, PsbM, PsbT, PsbX, PsbY, PsbZ, Psb30/Ycf12, peripheral proteins PsbO, CyanoQ (PsbQ), PsbU, PsbV and a large number of cofactors. It forms dimeric complexes.

The protein resides in the cellular thylakoid membrane. In terms of biological role, one of the extrinsic, lumenal subunits of photosystem II (PSII). PSII is a light-driven water plastoquinone oxidoreductase, using light energy to abstract electrons from H(2)O, generating a proton gradient subsequently used for ATP formation. The extrinsic proteins stabilize the structure of photosystem II oxygen-evolving complex (OEC), the ion environment of oxygen evolution and protect the OEC against heat-induced inactivation. This chain is Photosystem II extrinsic protein U, found in Crocosphaera subtropica (strain ATCC 51142 / BH68) (Cyanothece sp. (strain ATCC 51142)).